The chain runs to 578 residues: Interleukin-10 receptor subunit alpha (578 aa).

A signal peptide spans 1-21 (MLPCLVVLLAALLSLRLGSDA). Residues 22 to 235 (HGTELPSPPS…LTRQYFTVTN (214 aa)) lie on the Extracellular side of the membrane. N50, N74, N110, N154, N177, and N189 each carry an N-linked (GlcNAc...) asparagine glycan. A disulfide bond links C56 and C75. C202 and C223 form a disulfide bridge. A helical transmembrane segment spans residues 236–256 (VIIFFAFVLLLSGALAYCLAL). The Cytoplasmic segment spans residues 257 to 578 (QLYVRRRKKL…PLISSLQSSE (322 aa)). The tract at residues 313-436 (LHGSTDSGFG…PPEPEVPGEE (124 aa)) is disordered. Residues 316 to 332 (STDSGFGSTKPSLQTEE) are compositionally biased toward polar residues. The BTRC recognition motif signature appears at 318-323 (DSGFGS). The span at 357-371 (GDSCSSGSSNSTDSG) shows a compositional bias: low complexity. A compositionally biased stretch (polar residues) spans 377–396 (PSLSPSTGPTWEQQVGSNSR).

This sequence belongs to the type II cytokine receptor family. In terms of assembly, interacts with IL10. Interacts with IL10RB. Interacts (via its cytoplasmic domain) with JAK1 (via N-terminus). Interacts with BTRC; this interaction leads to IL10RA ubiquitination and subsequent degradation. Interacts with STAT3. (Microbial infection) Interacts with human cytomegalovirus protein IL10. As to quaternary structure, (Microbial infection) Interacts with Epstein-Barr virus protein IL10. Post-translationally, phosphorylated. Phosphorylation of the cytoplasmic tail induced STAT3 activation. Ubiquitinated by BTRC; ubiquitination leads to endocytosis and subsequent degradation of IL10RA. As to expression, primarily expressed in hematopoetic cells including B-cells, T-cells, NK cells, monocytes and macrophages. Not expressed in non-hematopoetic cells such as fibroblasts or endothelial cells.

It is found in the cell membrane. Its subcellular location is the cytoplasm. Cell surface receptor for the cytokine IL10 that participates in IL10-mediated anti-inflammatory functions, limiting excessive tissue disruption caused by inflammation. Upon binding to IL10, induces a conformational change in IL10RB, allowing IL10RB to bind IL10 as well. In turn, the heterotetrameric assembly complex, composed of two subunits of IL10RA and IL10RB, activates the kinases JAK1 and TYK2 that are constitutively associated with IL10RA and IL10RB respectively. These kinases then phosphorylate specific tyrosine residues in the intracellular domain in IL10RA leading to the recruitment and subsequent phosphorylation of STAT3. Once phosphorylated, STAT3 homodimerizes, translocates to the nucleus and activates the expression of anti-inflammatory genes. In addition, IL10RA-mediated activation of STAT3 inhibits starvation-induced autophagy. This Homo sapiens (Human) protein is Interleukin-10 receptor subunit alpha (IL10RA).